The primary structure comprises 561 residues: Dihydroxy-acid dehydratase (561 aa).

D78 serves as a coordination point for Mg(2+). C119 contacts [2Fe-2S] cluster. Positions 120 and 121 each coordinate Mg(2+). K121 is modified (N6-carboxylysine). C192 contributes to the [2Fe-2S] cluster binding site. E448 is a Mg(2+) binding site. Catalysis depends on S474, which acts as the Proton acceptor.

The protein belongs to the IlvD/Edd family. Homodimer. The cofactor is [2Fe-2S] cluster. It depends on Mg(2+) as a cofactor.

The catalysed reaction is (2R)-2,3-dihydroxy-3-methylbutanoate = 3-methyl-2-oxobutanoate + H2O. The enzyme catalyses (2R,3R)-2,3-dihydroxy-3-methylpentanoate = (S)-3-methyl-2-oxopentanoate + H2O. It participates in amino-acid biosynthesis; L-isoleucine biosynthesis; L-isoleucine from 2-oxobutanoate: step 3/4. Its pathway is amino-acid biosynthesis; L-valine biosynthesis; L-valine from pyruvate: step 3/4. In terms of biological role, functions in the biosynthesis of branched-chain amino acids. Catalyzes the dehydration of (2R,3R)-2,3-dihydroxy-3-methylpentanoate (2,3-dihydroxy-3-methylvalerate) into 2-oxo-3-methylpentanoate (2-oxo-3-methylvalerate) and of (2R)-2,3-dihydroxy-3-methylbutanoate (2,3-dihydroxyisovalerate) into 2-oxo-3-methylbutanoate (2-oxoisovalerate), the penultimate precursor to L-isoleucine and L-valine, respectively. The chain is Dihydroxy-acid dehydratase from Sulfurimonas denitrificans (strain ATCC 33889 / DSM 1251) (Thiomicrospira denitrificans (strain ATCC 33889 / DSM 1251)).